The primary structure comprises 319 residues: Cobalamin biosynthesis protein CobD (319 aa).

4 helical membrane-spanning segments follow: residues Ala55–Leu75, Glu78–Gly98, Val153–Ala173, and Leu296–Val316.

It belongs to the CobD/CbiB family.

It is found in the cell membrane. It functions in the pathway cofactor biosynthesis; adenosylcobalamin biosynthesis. In terms of biological role, converts cobyric acid to cobinamide by the addition of aminopropanol on the F carboxylic group. The chain is Cobalamin biosynthesis protein CobD from Citrobacter koseri (strain ATCC BAA-895 / CDC 4225-83 / SGSC4696).